The chain runs to 788 residues: Xylulose-5-phosphate phosphoketolase (788 aa).

It belongs to the XFP family. As to quaternary structure, homohexamer. It depends on thiamine diphosphate as a cofactor.

The catalysed reaction is D-xylulose 5-phosphate + phosphate = acetyl phosphate + D-glyceraldehyde 3-phosphate + H2O. The polypeptide is Xylulose-5-phosphate phosphoketolase (xpkA) (Lactiplantibacillus pentosus (Lactobacillus pentosus)).